Here is a 105-residue protein sequence, read N- to C-terminus: Small ribosomal subunit protein uS10 (105 aa).

The protein belongs to the universal ribosomal protein uS10 family. As to quaternary structure, part of the 30S ribosomal subunit.

Functionally, involved in the binding of tRNA to the ribosomes. The sequence is that of Small ribosomal subunit protein uS10 from Trichormus variabilis (strain ATCC 29413 / PCC 7937) (Anabaena variabilis).